The sequence spans 92 residues: Small ribosomal subunit protein uS19 (92 aa).

It belongs to the universal ribosomal protein uS19 family.

Protein S19 forms a complex with S13 that binds strongly to the 16S ribosomal RNA. The chain is Small ribosomal subunit protein uS19 from Corynebacterium aurimucosum (strain ATCC 700975 / DSM 44827 / CIP 107346 / CN-1) (Corynebacterium nigricans).